A 121-amino-acid polypeptide reads, in one-letter code: Large ribosomal subunit protein bL12 (121 aa).

The protein belongs to the bacterial ribosomal protein bL12 family. In terms of assembly, homodimer. Part of the ribosomal stalk of the 50S ribosomal subunit. Forms a multimeric L10(L12)X complex, where L10 forms an elongated spine to which 2 to 4 L12 dimers bind in a sequential fashion. Binds GTP-bound translation factors.

Functionally, forms part of the ribosomal stalk which helps the ribosome interact with GTP-bound translation factors. Is thus essential for accurate translation. This is Large ribosomal subunit protein bL12 from Limosilactobacillus fermentum (strain NBRC 3956 / LMG 18251) (Lactobacillus fermentum).